We begin with the raw amino-acid sequence, 267 residues long: Regulatory protein RecX (267 aa).

The protein belongs to the RecX family.

It is found in the cytoplasm. Functionally, modulates RecA activity. This chain is Regulatory protein RecX, found in Staphylococcus haemolyticus (strain JCSC1435).